Consider the following 544-residue polypeptide: Dihydrolipoyllysine-residue acetyltransferase component of pyruvate dehydrogenase complex (544 aa).

2 Lipoyl-binding domains span residues 1–76 (MYEF…VTID) and 113–188 (IYDF…VLIG). Residues lysine 42 and lysine 154 each carry the N6-lipoyllysine modification. One can recognise a Peripheral subunit-binding (PSBD) domain in the interval 242-279 (LASPVARKLASDLGVDIATIKGSGEQGRVMKDDVQNSK). The active site involves histidine 516.

The protein belongs to the 2-oxoacid dehydrogenase family. As to quaternary structure, forms a 24-polypeptide structural core with octahedral symmetry. Requires (R)-lipoate as cofactor.

The enzyme catalyses N(6)-[(R)-dihydrolipoyl]-L-lysyl-[protein] + acetyl-CoA = N(6)-[(R)-S(8)-acetyldihydrolipoyl]-L-lysyl-[protein] + CoA. In terms of biological role, the pyruvate dehydrogenase complex catalyzes the overall conversion of pyruvate to acetyl-CoA and CO(2). It contains multiple copies of three enzymatic components: pyruvate dehydrogenase (E1), dihydrolipoamide acetyltransferase (E2) and lipoamide dehydrogenase (E3). The sequence is that of Dihydrolipoyllysine-residue acetyltransferase component of pyruvate dehydrogenase complex (pdhC) from Acholeplasma laidlawii.